The primary structure comprises 906 residues: Protein translocase subunit SecA (906 aa).

ATP-binding positions include Gln86, 104-108 (GEGKT), and Asp499. The interval 862–886 (KPVVSRIDPKDRNPDDPTSWGRVSR) is disordered. Zn(2+)-binding residues include Cys890, Cys892, Cys901, and His902.

The protein belongs to the SecA family. Monomer and homodimer. Part of the essential Sec protein translocation apparatus which comprises SecA, SecYEG and auxiliary proteins SecDF-YajC and YidC. Requires Zn(2+) as cofactor.

The protein resides in the cell inner membrane. It localises to the cytoplasm. It carries out the reaction ATP + H2O + cellular proteinSide 1 = ADP + phosphate + cellular proteinSide 2.. Functionally, part of the Sec protein translocase complex. Interacts with the SecYEG preprotein conducting channel. Has a central role in coupling the hydrolysis of ATP to the transfer of proteins into and across the cell membrane, serving both as a receptor for the preprotein-SecB complex and as an ATP-driven molecular motor driving the stepwise translocation of polypeptide chains across the membrane. This is Protein translocase subunit SecA from Rickettsia africae (strain ESF-5).